The primary structure comprises 440 residues: Nuclear fusion protein BIK1 (440 aa).

The region spanning 26-69 (GPVDTKAGMFAGVDLLANIGKNDGSFMGKKYFQTEYPQSGLFIQ) is the CAP-Gly domain. A phosphoserine mark is found at S95 and S110. The segment at 108–157 (QFSPMDDPKSPTPMRSFRITSRHSGNQQSMDQEASDHHQQQEFGYDNRED) is disordered. The span at 125–139 (RITSRHSGNQQSMDQ) shows a compositional bias: polar residues. The segment covering 141–157 (ASDHHQQQEFGYDNRED) has biased composition (basic and acidic residues). A coiled-coil region spans residues 190 to 397 (NSSEVTIELR…AQAQTAVESL (208 aa)). The short motif at 416-429 (CEHCDTMGHNTAEC) is the CCHC-box element.

The protein localises to the cytoplasm. It is found in the cytoskeleton. Its subcellular location is the microtubule organizing center. It localises to the spindle pole body. The protein resides in the spindle. Functionally, required for nuclear fusion, chromosome disjunction, and nuclear segregation during mitosis. Probably required for the formation or stabilization of microtubules during mitosis and for spindle pole body fusion during conjugation. This is Nuclear fusion protein BIK1 (BIK1) from Saccharomyces cerevisiae (strain ATCC 204508 / S288c) (Baker's yeast).